Consider the following 564-residue polypeptide: Proline--tRNA ligase (564 aa).

Belongs to the class-II aminoacyl-tRNA synthetase family. ProS type 1 subfamily. Homodimer.

It is found in the cytoplasm. The catalysed reaction is tRNA(Pro) + L-proline + ATP = L-prolyl-tRNA(Pro) + AMP + diphosphate. In terms of biological role, catalyzes the attachment of proline to tRNA(Pro) in a two-step reaction: proline is first activated by ATP to form Pro-AMP and then transferred to the acceptor end of tRNA(Pro). As ProRS can inadvertently accommodate and process non-cognate amino acids such as alanine and cysteine, to avoid such errors it has two additional distinct editing activities against alanine. One activity is designated as 'pretransfer' editing and involves the tRNA(Pro)-independent hydrolysis of activated Ala-AMP. The other activity is designated 'posttransfer' editing and involves deacylation of mischarged Ala-tRNA(Pro). The misacylated Cys-tRNA(Pro) is not edited by ProRS. In Coxiella burnetii (strain Dugway 5J108-111), this protein is Proline--tRNA ligase.